The chain runs to 427 residues: Serine hydroxymethyltransferase (427 aa).

(6S)-5,6,7,8-tetrahydrofolate contacts are provided by residues L118 and 122–124; that span reads GHL. K227 is subject to N6-(pyridoxal phosphate)lysine. (6S)-5,6,7,8-tetrahydrofolate is bound by residues E243 and 351–353; that span reads SPF.

It belongs to the SHMT family. In terms of assembly, homodimer. It depends on pyridoxal 5'-phosphate as a cofactor.

It is found in the cytoplasm. The catalysed reaction is (6R)-5,10-methylene-5,6,7,8-tetrahydrofolate + glycine + H2O = (6S)-5,6,7,8-tetrahydrofolate + L-serine. Its pathway is one-carbon metabolism; tetrahydrofolate interconversion. It functions in the pathway amino-acid biosynthesis; glycine biosynthesis; glycine from L-serine: step 1/1. In terms of biological role, catalyzes the reversible interconversion of serine and glycine with tetrahydrofolate (THF) serving as the one-carbon carrier. This reaction serves as the major source of one-carbon groups required for the biosynthesis of purines, thymidylate, methionine, and other important biomolecules. Also exhibits THF-independent aldolase activity toward beta-hydroxyamino acids, producing glycine and aldehydes, via a retro-aldol mechanism. This is Serine hydroxymethyltransferase from Thermotoga maritima (strain ATCC 43589 / DSM 3109 / JCM 10099 / NBRC 100826 / MSB8).